Reading from the N-terminus, the 303-residue chain is Heme A synthase (303 aa).

At 1–8 (MFGKKNLK) the chain is on the cytoplasmic side. Residues 9-29 (WLGVVATLMMTFVQLGGALVT) form a helical membrane-spanning segment. Residues 30 to 67 (KTGSADGCGSSWPLCHGALIPEFFPIDTIIELSHRAVS) are Extracellular-facing. Cys-37 and Cys-44 form a disulfide bridge. Residue Glu-60 is part of the active site. His-63 lines the heme o pocket. A helical membrane pass occupies residues 68–88 (ALSLLMVLWLVITAWKHIGYI). Over 89–93 (KEIKP) the chain is Cytoplasmic. Residues 94 to 114 (LSIISVGFLLLQALIGAAAVI) traverse the membrane as a helical segment. At 115-125 (WQQNDYVLALH) the chain is on the extracellular side. Residue His-125 participates in heme o binding. The chain crosses the membrane as a helical span at residues 126-146 (FGISLISFSSVFLITLIIFSI). Residues 147–163 (DQKYEAAELYIKKPLRR) are Cytoplasmic-facing. A helical transmembrane segment spans residues 164–184 (LTWLMAIIIYCGVYTGALVRH). Residues 185-215 (ADASLAYGGWPLPFHDLVPHSEQDWVQLTHR) lie on the Extracellular side of the membrane. Heme b is bound at residue His-214. Residues 216-236 (IMAFIVFTIIMITYIHAVKNY) traverse the membrane as a helical segment. Topologically, residues 237–244 (PNNRTVHY) are cytoplasmic. Residues 245–265 (GYTAAFILVILQVITGALSIM) traverse the membrane as a helical segment. Residues 266 to 270 (TNVNL) lie on the Extracellular side of the membrane. A helical membrane pass occupies residues 271 to 291 (IIALFHALFITYLFGMTTYFI). A heme b-binding site is contributed by His-276. Over 292–303 (MLMLRSVRSDKQ) the chain is Cytoplasmic.

It belongs to the COX15/CtaA family. Type 1 subfamily. Interacts with CtaB. Requires heme b as cofactor.

The protein resides in the cell membrane. The catalysed reaction is Fe(II)-heme o + 2 A + H2O = Fe(II)-heme a + 2 AH2. It functions in the pathway porphyrin-containing compound metabolism; heme A biosynthesis; heme A from heme O: step 1/1. Catalyzes the conversion of heme O to heme A by two successive hydroxylations of the methyl group at C8. The first hydroxylation forms heme I, the second hydroxylation results in an unstable dihydroxymethyl group, which spontaneously dehydrates, resulting in the formyl group of heme A. In Staphylococcus aureus (strain bovine RF122 / ET3-1), this protein is Heme A synthase.